A 133-amino-acid polypeptide reads, in one-letter code: Cytochrome c-type biogenesis protein CcmE (133 aa).

Residues 1–7 (MKKKHKR) lie on the Cytoplasmic side of the membrane. Residues 8–28 (LLITSGIFCFLSCIVFFILTT) form a helical; Signal-anchor for type II membrane protein membrane-spanning segment. At 29-133 (LKENISFFYT…YMPKVLKQIP (105 aa)) the chain is on the periplasmic side. Residues H120 and Y124 each contribute to the heme site.

Belongs to the CcmE/CycJ family.

It localises to the cell inner membrane. Functionally, heme chaperone required for the biogenesis of c-type cytochromes. Transiently binds heme delivered by CcmC and transfers the heme to apo-cytochromes in a process facilitated by CcmF and CcmH. This Wolbachia sp. subsp. Drosophila simulans (strain wRi) protein is Cytochrome c-type biogenesis protein CcmE.